The chain runs to 93 residues: Alpha-defensin 23 (93 aa).

The first 19 residues, 1-19 (MKTLVLLSALILLAFQVQA), serve as a signal peptide directing secretion. Positions 20–58 (DPIQNTDEETKTEEQPGKEDQAVSVSFGDPEGSSLQEES) are excised as a propeptide. Positions 24–54 (NTDEETKTEEQPGKEDQAVSVSFGDPEGSSL) are disordered. Positions 27–40 (EETKTEEQPGKEDQ) are enriched in basic and acidic residues. 3 disulfide bridges follow: C64/C92, C66/C81, and C71/C91.

It belongs to the alpha-defensin family.

It is found in the secreted. Functionally, may have microbicidal activities. This Mus musculus (Mouse) protein is Alpha-defensin 23 (Defa23).